The chain runs to 174 residues: NADH-ubiquinone oxidoreductase chain 6 (174 aa).

A run of 4 helical transmembrane segments spans residues 24–44 (LALGLTLLIQTIFVCLLSGLM), 53–73 (ILFLIFLGGMLVLFIYVTSLA), 82–102 (IKLTLFSMFILFFMFILSMIL), and 143–163 (FVTILLMNYLLITLIVVVKIT).

Belongs to the complex I subunit 6 family.

Its subcellular location is the mitochondrion membrane. It carries out the reaction a ubiquinone + NADH + 5 H(+)(in) = a ubiquinol + NAD(+) + 4 H(+)(out). In terms of biological role, core subunit of the mitochondrial membrane respiratory chain NADH dehydrogenase (Complex I) that is believed to belong to the minimal assembly required for catalysis. Complex I functions in the transfer of electrons from NADH to the respiratory chain. The immediate electron acceptor for the enzyme is believed to be ubiquinone. The chain is NADH-ubiquinone oxidoreductase chain 6 (mt:ND6) from Drosophila yakuba (Fruit fly).